Consider the following 216-residue polypeptide: Adenylate kinase (216 aa).

ATP is bound at residue 13–18 (GAGKGT). An NMP region spans residues 33 to 66 (TTGDALRANKDMDISDMDTEYDTPREYMEAGDLV). Residues threonine 34, arginine 39, 64 to 66 (DLV), 89 to 92 (GYPR), and glutamine 96 each bind AMP. Residues 125–162 (GRRVCDDCGTNYHVEFNQPEEDGVCDECGGDLIQRDDD) form an LID region. Arginine 126 contacts ATP. The Zn(2+) site is built by cysteine 129, cysteine 132, cysteine 149, and cysteine 152. Arginine 159 and arginine 170 together coordinate AMP. Glutamine 198 serves as a coordination point for ATP.

It belongs to the adenylate kinase family. As to quaternary structure, monomer.

It is found in the cytoplasm. It catalyses the reaction AMP + ATP = 2 ADP. It functions in the pathway purine metabolism; AMP biosynthesis via salvage pathway; AMP from ADP: step 1/1. Its function is as follows. Catalyzes the reversible transfer of the terminal phosphate group between ATP and AMP. Plays an important role in cellular energy homeostasis and in adenine nucleotide metabolism. The polypeptide is Adenylate kinase (Haloarcula marismortui (strain ATCC 43049 / DSM 3752 / JCM 8966 / VKM B-1809) (Halobacterium marismortui)).